Here is a 783-residue protein sequence, read N- to C-terminus: Heat shock transcription factor (783 aa).

The disordered stretch occupies residues 1 to 59 (MTTNLYAIAGPSKPTTPTSTPSPRSEPPSPLKSLTSLPTNPLNSHGTSTPNTLTNQLSS). 2 stretches are compositionally biased toward low complexity: residues 11 to 23 (PSKP…TPSP) and 31 to 42 (LKSLTSLPTNPL). The segment covering 43–59 (NSHGTSTPNTLTNQLSS) has biased composition (polar residues). A DNA-binding region spans residues 78–168 (MKVPAFLNKL…PIELWEFANP (91 aa)). Residues 181-262 (VTRKNNRPSN…PGSVPPSHTS (82 aa)) are disordered. 2 stretches are compositionally biased toward low complexity: residues 189–199 (SNSGVGPSSSV) and 209–233 (STRS…ISQG). The span at 238-262 (NHSTSGKYLITDGTTPGSVPPSHTS) shows a compositional bias: polar residues. The involved in trimerization stretch occupies residues 280-333 (GIAAIRQTQASIATDLRKLQASNEALWRQAYETQEKQRKHEETIDLIVSFLERL). 2 stretches are compositionally biased toward basic and acidic residues: residues 350 to 372 (RGVG…SRFA) and 399 to 415 (TGEH…DRLV). Disordered stretches follow at residues 350-554 (RGVG…LLSP), 599-652 (QALA…TLAL), and 736-783 (QGLA…KSES). The segment covering 418-448 (GSNSEYSIPSVKRTSSSSHPISLGQLGSSRF) has biased composition (polar residues). Low complexity-rich tracts occupy residues 452 to 467 (PSED…GSTS), 497 to 511 (LSPL…PSSS), 522 to 550 (PFPS…PSQP), and 616 to 632 (NPNG…AHGM). A compositionally biased stretch (acidic residues) spans 742-752 (GEEEGEREVEG). The span at 753 to 765 (DGGVSSSGAGAGA) shows a compositional bias: gly residues.

This sequence belongs to the HSF family. As to quaternary structure, homotrimer. Homotrimerization increases the affinity of HSF1 to DNA. Interacts with transcriptional coregulator SSA1 on chromatin.

It localises to the nucleus. Its function is as follows. DNA-binding transcription factor that specifically binds heat shock promoter elements (HSE) and activates transcription. Together with its coregulator SSA1, activates expression of laccase LAC1 during glucose starvation. The sequence is that of Heat shock transcription factor from Cryptococcus neoformans var. neoformans serotype D (strain JEC21 / ATCC MYA-565) (Filobasidiella neoformans).